Consider the following 34-residue polypeptide: Beta-theraphotoxin-Pmu1a (34 aa).

Disulfide bonds link Cys-3-Cys-18, Cys-10-Cys-23, and Cys-17-Cys-30. Residue Leu-34 is modified to Leucine amide.

This sequence belongs to the neurotoxin 10 (Hwtx-1) family. 34 (Jztx-26) subfamily. As to expression, expressed by the venom gland.

It is found in the secreted. Functionally, spider venom neurotoxin that blocks voltage-gated sodium channels Nav1.3/SCN3A and Nav1.8/SCN10A in human (IC(50)=2 uM and IC(50)=4 uM, respectively) and rat (IC(50)=2 uM and IC(50)=2.5 uM, respectively). This Pterinochilus murinus (Mombasa golden starburst baboon spider) protein is Beta-theraphotoxin-Pmu1a.